Consider the following 361-residue polypeptide: UDP-N-acetylglucosamine--N-acetylmuramyl-(pentapeptide) pyrophosphoryl-undecaprenol N-acetylglucosamine transferase (361 aa).

UDP-N-acetyl-alpha-D-glucosamine-binding positions include 12 to 14 (TGG), asparagine 123, arginine 166, serine 192, and glutamine 293.

This sequence belongs to the glycosyltransferase 28 family. MurG subfamily.

The protein resides in the cell inner membrane. The enzyme catalyses di-trans,octa-cis-undecaprenyl diphospho-N-acetyl-alpha-D-muramoyl-L-alanyl-D-glutamyl-meso-2,6-diaminopimeloyl-D-alanyl-D-alanine + UDP-N-acetyl-alpha-D-glucosamine = di-trans,octa-cis-undecaprenyl diphospho-[N-acetyl-alpha-D-glucosaminyl-(1-&gt;4)]-N-acetyl-alpha-D-muramoyl-L-alanyl-D-glutamyl-meso-2,6-diaminopimeloyl-D-alanyl-D-alanine + UDP + H(+). It functions in the pathway cell wall biogenesis; peptidoglycan biosynthesis. Functionally, cell wall formation. Catalyzes the transfer of a GlcNAc subunit on undecaprenyl-pyrophosphoryl-MurNAc-pentapeptide (lipid intermediate I) to form undecaprenyl-pyrophosphoryl-MurNAc-(pentapeptide)GlcNAc (lipid intermediate II). The protein is UDP-N-acetylglucosamine--N-acetylmuramyl-(pentapeptide) pyrophosphoryl-undecaprenol N-acetylglucosamine transferase of Caulobacter vibrioides (strain ATCC 19089 / CIP 103742 / CB 15) (Caulobacter crescentus).